The primary structure comprises 196 residues: Kunitz trypsin inhibitor 5 (196 aa).

Positions 1–19 (MSSLLYIFLLLAVFISHRG) are cleaved as a signal peptide. Residues Cys-156 and Cys-167 are joined by a disulfide bond.

This sequence belongs to the protease inhibitor I3 (leguminous Kunitz-type inhibitor) family.

The protein localises to the endoplasmic reticulum. Functionally, can inhibit both serine proteases and cysteine proteases. May be involved in the modulation of the proteases that participate in the hydrolysis of dietary proteins in the gut of spider mites. The chain is Kunitz trypsin inhibitor 5 from Arabidopsis thaliana (Mouse-ear cress).